Consider the following 338-residue polypeptide: Tryptophan--tRNA ligase (338 aa).

ATP contacts are provided by residues 12–14 (QPT) and 20–21 (GN). The 'HIGH' region signature appears at 13 to 21 (PTGDLHIGN). Residue Asp-136 participates in L-tryptophan binding. Residues 148–150 (GED), Ile-191, and 200–204 (KMSKS) each bind ATP. The 'KMSKS' region signature appears at 200 to 204 (KMSKS).

Belongs to the class-I aminoacyl-tRNA synthetase family. As to quaternary structure, homodimer.

It localises to the cytoplasm. It catalyses the reaction tRNA(Trp) + L-tryptophan + ATP = L-tryptophyl-tRNA(Trp) + AMP + diphosphate + H(+). Its function is as follows. Catalyzes the attachment of tryptophan to tRNA(Trp). This chain is Tryptophan--tRNA ligase, found in Prochlorococcus marinus subsp. pastoris (strain CCMP1986 / NIES-2087 / MED4).